A 131-amino-acid chain; its full sequence is Large ribosomal subunit protein bL17 (131 aa).

Belongs to the bacterial ribosomal protein bL17 family. In terms of assembly, part of the 50S ribosomal subunit. Contacts protein L32.

This is Large ribosomal subunit protein bL17 from Burkholderia mallei (strain NCTC 10229).